A 330-amino-acid chain; its full sequence is Beta-ketoacyl-[acyl-carrier-protein] synthase III (330 aa).

Residues cysteine 115 and histidine 255 contribute to the active site. The ACP-binding stretch occupies residues glutamine 256–arginine 260. Residue asparagine 285 is part of the active site.

This sequence belongs to the thiolase-like superfamily. FabH family. Homodimer.

It is found in the cytoplasm. The enzyme catalyses malonyl-[ACP] + acetyl-CoA + H(+) = 3-oxobutanoyl-[ACP] + CO2 + CoA. Its pathway is lipid metabolism; fatty acid biosynthesis. Functionally, catalyzes the condensation reaction of fatty acid synthesis by the addition to an acyl acceptor of two carbons from malonyl-ACP. Catalyzes the first condensation reaction which initiates fatty acid synthesis and may therefore play a role in governing the total rate of fatty acid production. Possesses both acetoacetyl-ACP synthase and acetyl transacylase activities. Its substrate specificity determines the biosynthesis of branched-chain and/or straight-chain of fatty acids. This is Beta-ketoacyl-[acyl-carrier-protein] synthase III from Helicobacter pylori (strain P12).